Here is a 295-residue protein sequence, read N- to C-terminus: Shikimate dehydrogenase (NADP(+)) (295 aa).

Residues 24 to 26 (SRS) and T71 each bind shikimate. K75 functions as the Proton acceptor in the catalytic mechanism. Residue E87 coordinates NADP(+). Shikimate is bound by residues N96 and D111. Residues 136–140 (GAGGA), 160–165 (NRTASR), and M233 contribute to the NADP(+) site. Shikimate is bound at residue Y235. NADP(+) is bound at residue G256.

This sequence belongs to the shikimate dehydrogenase family. Homodimer.

The catalysed reaction is shikimate + NADP(+) = 3-dehydroshikimate + NADPH + H(+). Its pathway is metabolic intermediate biosynthesis; chorismate biosynthesis; chorismate from D-erythrose 4-phosphate and phosphoenolpyruvate: step 4/7. Functionally, involved in the biosynthesis of the chorismate, which leads to the biosynthesis of aromatic amino acids. Catalyzes the reversible NADPH linked reduction of 3-dehydroshikimate (DHSA) to yield shikimate (SA). The polypeptide is Shikimate dehydrogenase (NADP(+)) (Cupriavidus necator (strain ATCC 17699 / DSM 428 / KCTC 22496 / NCIMB 10442 / H16 / Stanier 337) (Ralstonia eutropha)).